The primary structure comprises 465 residues: Glutamate--tRNA ligase (465 aa).

The short motif at 8-18 (PSPTGDLHIGG) is the 'HIGH' region element. A 'KMSKS' region motif is present at residues 235 to 239 (RLSKR). Lysine 238 serves as a coordination point for ATP.

The protein belongs to the class-I aminoacyl-tRNA synthetase family. Glutamate--tRNA ligase type 1 subfamily. Monomer.

It localises to the cytoplasm. The enzyme catalyses tRNA(Glu) + L-glutamate + ATP = L-glutamyl-tRNA(Glu) + AMP + diphosphate. In terms of biological role, catalyzes the attachment of glutamate to tRNA(Glu) in a two-step reaction: glutamate is first activated by ATP to form Glu-AMP and then transferred to the acceptor end of tRNA(Glu). This Dichelobacter nodosus (strain VCS1703A) protein is Glutamate--tRNA ligase.